The following is a 257-amino-acid chain: Large ribosomal subunit protein uL2 (257 aa).

The segment at 207–257 is disordered; it reads VDHPHGGGNHQHVGHPTTLKRSSPPGQKAGKVAARRTGLIRGGNKEGAADN.

The protein belongs to the universal ribosomal protein uL2 family. As to quaternary structure, component of the large ribosomal subunit.

It is found in the cytoplasm. Functionally, component of the large ribosomal subunit. The ribosome is a large ribonucleoprotein complex responsible for the synthesis of proteins in the cell. This is Large ribosomal subunit protein uL2 (RPL8) from Entamoeba histolytica (strain ATCC 30459 / HM-1:IMSS / ABRM).